We begin with the raw amino-acid sequence, 428 residues long: D-amino acid dehydrogenase (428 aa).

3–17 contacts FAD; it reads VVVLGSGVVGVTSAY.

This sequence belongs to the DadA oxidoreductase family. The cofactor is FAD.

The enzyme catalyses a D-alpha-amino acid + A + H2O = a 2-oxocarboxylate + AH2 + NH4(+). It functions in the pathway amino-acid degradation; D-alanine degradation; NH(3) and pyruvate from D-alanine: step 1/1. Functionally, oxidative deamination of D-amino acids. The protein is D-amino acid dehydrogenase of Paraburkholderia phytofirmans (strain DSM 17436 / LMG 22146 / PsJN) (Burkholderia phytofirmans).